A 324-amino-acid polypeptide reads, in one-letter code: Homeobox protein Nkx-2.5 (324 aa).

The segment at residues R138–R197 is a DNA-binding region (homeobox).

It belongs to the NK-2 homeobox family. As to quaternary structure, homodimer (via the homeobox); binds DNA as homodimer. Interacts (via the homeobox) with TBX5 (via the T-box); this complex binds DNA. Interacts with HIPK1 and HIPK2, but not HIPK3. Interacts with the C-terminal zinc finger of GATA4 through its homeobox domain. Also interacts with JARID2 which represses its ability to activate transcription of ANF. Interacts with FBLIM1. Interacts with TBX18. Interacts with histone methyltransferase NSD2 (via HMG box). Interacts with NEDD9. Interacts with TBX1. Expressed only in the heart.

It is found in the nucleus. In terms of biological role, transcription factor required for the development of the heart and the spleen. During heart development, acts as a transcriptional activator of NPPA/ANF in cooperation with GATA4. May cooperate with TBX2 to negatively modulate expression of NPPA/ANF in the atrioventricular canal. Binds to the core DNA motif of NPPA promoter. Together with PBX1, required for spleen development through a mechanism that involves CDKN2B repression. Positively regulates transcription of genes such as COL3A1 and MMP2, resulting in increased pulmonary endothelial fibrosis in response to hypoxia. The sequence is that of Homeobox protein Nkx-2.5 (NKX2-5) from Homo sapiens (Human).